We begin with the raw amino-acid sequence, 138 residues long: Acidic phospholipase A2 Ts-A1 (138 aa).

An N-terminal signal peptide occupies residues 1 to 16; it reads MRTLWIMAVLQVGVEG. 7 disulfide bridges follow: C42/C131, C44/C60, C59/C111, C65/C138, C66/C104, C73/C97, and C91/C102. Residues F43, G45, and G47 each contribute to the Ca(2+) site. The active site involves H63. D64 provides a ligand contact to Ca(2+). D105 is a catalytic residue.

Requires Ca(2+) as cofactor. In terms of tissue distribution, expressed by the venom gland.

It is found in the secreted. It catalyses the reaction a 1,2-diacyl-sn-glycero-3-phosphocholine + H2O = a 1-acyl-sn-glycero-3-phosphocholine + a fatty acid + H(+). Its function is as follows. Snake venom phospholipase A2 (PLA2) that shows a moderate inhibition of ADP-induced human platelet aggregation when tested on platelet rich plasma. Exhibits high hydrolytic activities and prefers the anionic micelles (dPPC with deoxycholate) to the zwitterionic micelles (dPPC with Triton X-100). PLA2 catalyzes the calcium-dependent hydrolysis of the 2-acyl groups in 3-sn-phosphoglycerides. This chain is Acidic phospholipase A2 Ts-A1, found in Trimeresurus stejnegeri (Chinese green tree viper).